Here is a 149-residue protein sequence, read N- to C-terminus: Protein FAM72A (149 aa).

Belongs to the FAM72 family. As to quaternary structure, interacts with UNG. As to expression, may be up-regulated in malignant colon cancers, compared to normal colon and colon adenomas. Expression is also elevated in other common cancer types, including breast, lung, uterus, and ovary.

It is found in the cytoplasm. Its subcellular location is the mitochondrion. May play a role in the regulation of cellular reactive oxygen species metabolism. May participate in cell growth regulation. The chain is Protein FAM72A (FAM72A) from Homo sapiens (Human).